The sequence spans 142 residues: Large ribosomal subunit protein uL13 (142 aa).

The protein belongs to the universal ribosomal protein uL13 family. Part of the 50S ribosomal subunit.

Functionally, this protein is one of the early assembly proteins of the 50S ribosomal subunit, although it is not seen to bind rRNA by itself. It is important during the early stages of 50S assembly. This is Large ribosomal subunit protein uL13 from Citrifermentans bemidjiense (strain ATCC BAA-1014 / DSM 16622 / JCM 12645 / Bem) (Geobacter bemidjiensis).